We begin with the raw amino-acid sequence, 289 residues long: UPF0725 protein At1g27860 (289 aa).

The segment at 266–289 (DQQRSMTLPSGEQAESSKKRPRLS) is disordered. Residues 268–279 (QRSMTLPSGEQA) are compositionally biased toward polar residues.

The protein belongs to the UPF0725 (EMB2204) family.

The protein is UPF0725 protein At1g27860 of Arabidopsis thaliana (Mouse-ear cress).